A 176-amino-acid polypeptide reads, in one-letter code: L-2,4-diaminobutyric acid acetyltransferase (176 aa).

The N-acetyltransferase domain maps to 16–171 (LSIDAPRVED…THLPEVLYRI (156 aa)).

It belongs to the acetyltransferase family. EctA subfamily.

It catalyses the reaction L-2,4-diaminobutanoate + acetyl-CoA = (2S)-4-acetamido-2-aminobutanoate + CoA + H(+). The protein operates within amine and polyamine biosynthesis; ectoine biosynthesis; L-ectoine from L-aspartate 4-semialdehyde: step 2/3. Catalyzes the acetylation of L-2,4-diaminobutyrate (DABA) to gamma-N-acetyl-alpha,gamma-diaminobutyric acid (ADABA) with acetyl coenzyme A. This chain is L-2,4-diaminobutyric acid acetyltransferase (ectA), found in Streptomyces anulatus (Streptomyces chrysomallus).